The chain runs to 692 residues: Elongation factor G (692 aa).

Residues E8–L282 enclose the tr-type G domain. GTP contacts are provided by residues A17–T24, D81–H85, and N135–D138.

The protein belongs to the TRAFAC class translation factor GTPase superfamily. Classic translation factor GTPase family. EF-G/EF-2 subfamily.

Its subcellular location is the cytoplasm. In terms of biological role, catalyzes the GTP-dependent ribosomal translocation step during translation elongation. During this step, the ribosome changes from the pre-translocational (PRE) to the post-translocational (POST) state as the newly formed A-site-bound peptidyl-tRNA and P-site-bound deacylated tRNA move to the P and E sites, respectively. Catalyzes the coordinated movement of the two tRNA molecules, the mRNA and conformational changes in the ribosome. This is Elongation factor G from Bacillus cytotoxicus (strain DSM 22905 / CIP 110041 / 391-98 / NVH 391-98).